The chain runs to 259 residues: Type III pantothenate kinase (259 aa).

6-13 (DVGNTNCT) lines the ATP pocket. 107–110 (GSDR) contacts substrate. Asp-109 serves as the catalytic Proton acceptor. K(+) is bound at residue Asp-129. Residue Thr-132 participates in ATP binding. Thr-184 lines the substrate pocket.

It belongs to the type III pantothenate kinase family. In terms of assembly, homodimer. NH4(+) is required as a cofactor. The cofactor is K(+).

It localises to the cytoplasm. The enzyme catalyses (R)-pantothenate + ATP = (R)-4'-phosphopantothenate + ADP + H(+). It functions in the pathway cofactor biosynthesis; coenzyme A biosynthesis; CoA from (R)-pantothenate: step 1/5. In terms of biological role, catalyzes the phosphorylation of pantothenate (Pan), the first step in CoA biosynthesis. The protein is Type III pantothenate kinase of Listeria welshimeri serovar 6b (strain ATCC 35897 / DSM 20650 / CCUG 15529 / CIP 8149 / NCTC 11857 / SLCC 5334 / V8).